Reading from the N-terminus, the 272-residue chain is Ribosome maturation factor RimP (272 aa).

Residues 209–272 form a disordered region; sequence QNLGILPPPP…RGDIDPPEGD (64 aa). Basic and acidic residues predominate over residues 250–266; sequence NTKEHRLAAERLRRGDI.

It belongs to the RimP family.

It localises to the cytoplasm. Functionally, required for maturation of 30S ribosomal subunits. The polypeptide is Ribosome maturation factor RimP (Rhodopseudomonas palustris (strain BisA53)).